We begin with the raw amino-acid sequence, 145 residues long: Basic phospholipase A2 cPt10 (145 aa).

Residues 1 to 21 form the signal peptide; it reads MYPAHLLVLLAVCVSLLGASA. The propeptide occupies 22–27; it reads IPPLPL. 7 disulfide bridges follow: C38–C98, C54–C144, C56–C72, C71–C125, C78–C118, C87–C111, and C105–C116. Residues Y55, G57, and G59 each contribute to the Ca(2+) site. H75 is an active-site residue. D76 contacts Ca(2+). Residue D119 is part of the active site.

This sequence belongs to the phospholipase A2 family. Group I subfamily. D49 sub-subfamily. Requires Ca(2+) as cofactor. As to expression, expressed by the venom gland.

The protein resides in the secreted. It catalyses the reaction a 1,2-diacyl-sn-glycero-3-phosphocholine + H2O = a 1-acyl-sn-glycero-3-phosphocholine + a fatty acid + H(+). PLA2 catalyzes the calcium-dependent hydrolysis of the 2-acyl groups in 3-sn-phosphoglycerides. In Laticauda semifasciata (Black-banded sea krait), this protein is Basic phospholipase A2 cPt10.